Reading from the N-terminus, the 111-residue chain is Large ribosomal subunit protein uL24 (111 aa).

The span at 48 to 65 (EKPSRSNREGGRTEREAP) shows a compositional bias: basic and acidic residues. The interval 48–111 (EKPSRSNREG…AKTTGEELDD (64 aa)) is disordered. The span at 69–80 (SNVNPIDSNGES) shows a compositional bias: polar residues. The span at 86-95 (KKVEDPDTGR) shows a compositional bias: basic and acidic residues.

The protein belongs to the universal ribosomal protein uL24 family. As to quaternary structure, part of the 50S ribosomal subunit.

Functionally, one of two assembly initiator proteins, it binds directly to the 5'-end of the 23S rRNA, where it nucleates assembly of the 50S subunit. One of the proteins that surrounds the polypeptide exit tunnel on the outside of the subunit. The chain is Large ribosomal subunit protein uL24 from Salinibacter ruber (strain DSM 13855 / M31).